The primary structure comprises 670 residues: Histone-lysine N-methyltransferase, H3 lysine-9 specific SUVH1 (670 aa).

A disordered region spans residues 53-140 (YPFSSSQANQ…RPISRPENMN (88 aa)). The span at 68–79 (NQAQYPPQHQQP) shows a compositional bias: low complexity. A compositionally biased stretch (basic residues) spans 123–133 (VKRRIPKKRPI). In terms of domain architecture, YDG spans 211-357 (GIVPGVEIGD…HNTFKYKLVR (147 aa)). One can recognise a Pre-SET domain in the interval 432-492 (FGCDCANLCK…TCKNKVTQMG (61 aa)). Residues Cys434, Cys436, Cys440, Cys447, Cys449, Cys475, Cys479, Cys481, and Cys484 each contribute to the Zn(2+) site. The 145-residue stretch at 495–639 (VRLEVFKTAN…PMTELTYDYG (145 aa)) folds into the SET domain. S-adenosyl-L-methionine-binding positions include 505-507 (RGW), Asp541, Tyr543, Arg593, and 596-597 (NH). Zn(2+) contacts are provided by Cys599, Cys658, Cys660, and Cys665. Residues 654-670 (GKRKCFCGSAYCRGSFG) enclose the Post-SET domain.

It belongs to the class V-like SAM-binding methyltransferase superfamily. Histone-lysine methyltransferase family. Suvar3-9 subfamily. Expressed in leaves stems and flowers.

It localises to the nucleus. The protein localises to the chromosome. Its subcellular location is the centromere. The enzyme catalyses L-lysyl(9)-[histone H3] + 2 S-adenosyl-L-methionine = N(6),N(6)-dimethyl-L-lysyl(9)-[histone H3] + 2 S-adenosyl-L-homocysteine + 2 H(+). Histone methyltransferase. Methylates 'Lys-9' of histone H3. H3 'Lys-9' methylation represents a specific tag for epigenetic transcriptional repression. This chain is Histone-lysine N-methyltransferase, H3 lysine-9 specific SUVH1 (SUVH1), found in Arabidopsis thaliana (Mouse-ear cress).